The primary structure comprises 538 residues: Zinc finger protein 155 (538 aa).

A KRAB domain is found at 8-78; the sequence is VTFKDVAVVF…GTATQREGNS (71 aa). 11 consecutive C2H2-type zinc fingers follow at residues 176–198, 204–226, 232–254, 260–282, 288–310, 316–338, 344–366, 372–394, 400–422, 428–450, and 456–478; these read YTCD…QRVH, FMCD…QRVH, FKCE…RKLH, YICE…KRIH, FKCD…SMVH, FRCD…CMVH, YRCE…QVVH, YNCK…QRVH, FKCE…QRSH, YKCE…QRVH, and YNCK…KRLH. A C2H2-type 12; degenerate zinc finger spans residues 484–506; it reads FKCEDCGKRLVHRTYRKDQPRDY.

The protein belongs to the krueppel C2H2-type zinc-finger protein family.

Its subcellular location is the nucleus. May be involved in transcriptional regulation. The chain is Zinc finger protein 155 (ZNF155) from Homo sapiens (Human).